The primary structure comprises 650 residues: Aminopeptidase B (650 aa).

S7 is modified (phosphoserine). 298–302 (GGMEN) is a substrate binding site. H325 is a Zn(2+) binding site. The Proton acceptor role is filled by E326. Zn(2+)-binding residues include H329 and E348. Position 446 is an N6-acetyllysine (K446).

Belongs to the peptidase M1 family. In terms of assembly, monomer. The cofactor is Zn(2+). As to expression, widely expressed.

The protein localises to the secreted. The catalysed reaction is Release of N-terminal Arg and Lys from oligopeptides when P1' is not Pro. Also acts on arylamides of Arg and Lys.. Functionally, exopeptidase which selectively removes arginine and/or lysine residues from the N-terminus of several peptide substrates including Arg(0)-Leu-enkephalin, Arg(0)-Met-enkephalin and Arg(-1)-Lys(0)-somatostatin-14. Can hydrolyze leukotriene A4 (LTA-4) into leukotriene B4 (LTB-4). The chain is Aminopeptidase B (Rnpep) from Rattus norvegicus (Rat).